Reading from the N-terminus, the 1101-residue chain is Rho GTPase-activating protein 30 (1101 aa).

The Rho-GAP domain maps to 20–215 (CDLREHLQHS…FILTHVDQLF (196 aa)). 2 disordered regions span residues 305-397 (RKLP…VRAL) and 450-499 (LQPR…LEDS). The segment covering 309–319 (LRVEDREEKSS) has biased composition (basic and acidic residues). Residues 348–367 (SSSSQPSSLMPESLESNSME) show a composition bias toward low complexity. A compositionally biased stretch (pro residues) spans 451-465 (QPRPSPALGPGPPGS). The residue at position 578 (S578) is a Phosphoserine. Residues 622-848 (LGPKPINWEG…EQKSIDVETE (227 aa)) are disordered. Basic and acidic residues-rich tracts occupy residues 659–677 (TRQEKEAKPRSTSDNREEA), 686–762 (EAGK…KGDD), 786–821 (EVVHKHEAEKGRESETKELRRKSDLKSREDQGHSED), and 829–844 (DDRKEGVFSKEQKSID). S875 is subject to Phosphoserine. Disordered regions lie at residues 878–901 (EINEQTSEMKQAPLQPSEPEGMEA) and 968–987 (CPRPGRLDGTPGEKAWGSRA). At S996 the chain carries Phosphoserine. The segment at 1044-1076 (SRPLSCLERPPEGTEGSEPRSRLSLPPRELHPV) is disordered. Positions 1052 to 1064 (RPPEGTEGSEPRS) are enriched in basic and acidic residues.

Interacts with RHOU in a GTP-independent manner.

The protein localises to the cytoplasmic vesicle. Its function is as follows. GTPase-activating protein (GAP) for RAC1 and RHOA, but not for CDC42. This is Rho GTPase-activating protein 30 (Arhgap30) from Mus musculus (Mouse).